We begin with the raw amino-acid sequence, 416 residues long: Phosphoribosylamine--glycine ligase (416 aa).

In terms of domain architecture, ATP-grasp spans 105–310; the sequence is KSFLKKYRIK…PLELILAATQ (206 aa). An ATP-binding site is contributed by 131 to 192; sequence IYSLTPPIVV…EEFLDGYELS (62 aa). 2 residues coordinate Mg(2+): Glu281 and Asn283.

The protein belongs to the GARS family. The cofactor is Mg(2+). It depends on Mn(2+) as a cofactor.

The enzyme catalyses 5-phospho-beta-D-ribosylamine + glycine + ATP = N(1)-(5-phospho-beta-D-ribosyl)glycinamide + ADP + phosphate + H(+). The protein operates within purine metabolism; IMP biosynthesis via de novo pathway; N(1)-(5-phospho-D-ribosyl)glycinamide from 5-phospho-alpha-D-ribose 1-diphosphate: step 2/2. The chain is Phosphoribosylamine--glycine ligase from Campylobacter jejuni subsp. jejuni serotype O:2 (strain ATCC 700819 / NCTC 11168).